A 303-amino-acid chain; its full sequence is Ribosomal RNA small subunit methyltransferase H (303 aa).

S-adenosyl-L-methionine contacts are provided by residues 33 to 35 (GGH), Asp-52, Phe-79, Asp-97, and Gln-104.

This sequence belongs to the methyltransferase superfamily. RsmH family.

It is found in the cytoplasm. It carries out the reaction cytidine(1402) in 16S rRNA + S-adenosyl-L-methionine = N(4)-methylcytidine(1402) in 16S rRNA + S-adenosyl-L-homocysteine + H(+). In terms of biological role, specifically methylates the N4 position of cytidine in position 1402 (C1402) of 16S rRNA. This Wolinella succinogenes (strain ATCC 29543 / DSM 1740 / CCUG 13145 / JCM 31913 / LMG 7466 / NCTC 11488 / FDC 602W) (Vibrio succinogenes) protein is Ribosomal RNA small subunit methyltransferase H.